Here is a 410-residue protein sequence, read N- to C-terminus: E3 SUMO-protein ligase EGR2 (410 aa).

The segment covering 68–83 has biased composition (low complexity); it reads PPASTTASSSVTSASP. Disordered regions lie at residues 68–95, 101–120, and 127–151; these read PPAS…GVCT, PELD…SGCT, and PSAF…SYPS. The HCFC1-binding-motif (HBM) motif lies at 104-107; sequence DHLY. Low complexity predominate over residues 127–143; that stretch reads PSAFLSPPTTSTSSLAY. N6-acetyllysine is present on lysine 188. The tract at residues 217–286 is disordered; it reads PSAGVTGPGA…PYPCPAEGCD (70 aa). Gly residues predominate over residues 222–231; it reads TGPGASGGSE. The span at 237 to 248 shows a compositional bias: polar residues; it reads GSGSAAVTTSPY. 3 C2H2-type zinc fingers span residues 278-302, 308-330, and 336-358; these read YPCP…IRIH, FQCR…IRTH, and FACD…TKIH. Positions 349–410 are disordered; the sequence is DERKRHTKIH…LACTSRTRTP (62 aa). Basic residues predominate over residues 353-363; that stretch reads RHTKIHLRQKE. Residues 367–380 are compositionally biased toward low complexity; the sequence is SAPSSSASAQPSAS.

The protein belongs to the EGR C2H2-type zinc-finger protein family. Interacts with HCFC1. Interacts with WWP2. Interacts with UBC9. Interacts with CITED1. Interacts (via phosphorylated form) with SFN. In terms of processing, ubiquitinated by WWP2 leading to proteasomal degradation. Post-translationally, acetylated. May be deacetylated by HDAC6, HDAC10 or SIRT1.

It localises to the nucleus. It participates in protein modification; protein sumoylation. Its function is as follows. Sequence-specific DNA-binding transcription factor. Plays a role in hindbrain segmentation by regulating the expression of a subset of homeobox containing genes and in Schwann cell myelination by regulating the expression of genes involved in the formation and maintenance of myelin. Binds to two EGR2-consensus sites EGR2A (5'-CTGTAGGAG-3') and EGR2B (5'-ATGTAGGTG-3') in the HOXB3 enhancer and promotes HOXB3 transcriptional activation. Binds to specific DNA sites located in the promoter region of HOXA4, HOXB2 and ERBB2. Regulates hindbrain segmentation by controlling the expression of Hox genes, such as HOXA4, HOXB3 and HOXB2, and thereby specifying odd and even rhombomeres. Promotes the expression of HOXB3 in the rhombomere r5 in the hindbrain. Regulates myelination in the peripheral nervous system after birth, possibly by regulating the expression of myelin proteins, such as MPZ, and by promoting the differentiation of Schwann cells. Involved in the development of the jaw openener musculature, probably by playing a role in its innervation through trigeminal motor neurons. May play a role in adipogenesis, possibly by regulating the expression of CEBPB. E3 SUMO-protein ligase helping SUMO1 conjugation to its coregulators NAB1 and NAB2, whose sumoylation down-regulates EGR2 transcriptional activity. In Cricetulus griseus (Chinese hamster), this protein is E3 SUMO-protein ligase EGR2 (EGR2).